Consider the following 139-residue polypeptide: ATP synthase epsilon chain (139 aa).

It belongs to the ATPase epsilon chain family. F-type ATPases have 2 components, CF(1) - the catalytic core - and CF(0) - the membrane proton channel. CF(1) has five subunits: alpha(3), beta(3), gamma(1), delta(1), epsilon(1). CF(0) has three main subunits: a, b and c.

The protein resides in the cell inner membrane. Produces ATP from ADP in the presence of a proton gradient across the membrane. In Acinetobacter baumannii (strain SDF), this protein is ATP synthase epsilon chain.